The primary structure comprises 486 residues: Glutamyl-tRNA(Gln) amidotransferase subunit A (486 aa).

Active-site charge relay system residues include Lys-78 and Ser-153. Ser-177 serves as the catalytic Acyl-ester intermediate.

Belongs to the amidase family. GatA subfamily. In terms of assembly, heterotrimer of A, B and C subunits.

It carries out the reaction L-glutamyl-tRNA(Gln) + L-glutamine + ATP + H2O = L-glutaminyl-tRNA(Gln) + L-glutamate + ADP + phosphate + H(+). Allows the formation of correctly charged Gln-tRNA(Gln) through the transamidation of misacylated Glu-tRNA(Gln) in organisms which lack glutaminyl-tRNA synthetase. The reaction takes place in the presence of glutamine and ATP through an activated gamma-phospho-Glu-tRNA(Gln). The sequence is that of Glutamyl-tRNA(Gln) amidotransferase subunit A from Ruminiclostridium cellulolyticum (strain ATCC 35319 / DSM 5812 / JCM 6584 / H10) (Clostridium cellulolyticum).